Consider the following 33-residue polypeptide: pyr operon leader peptide (33 aa).

This Salmonella typhi protein is pyr operon leader peptide (pyrL).